The primary structure comprises 493 residues: Glutamyl-tRNA(Gln) amidotransferase subunit A (493 aa).

Residues Lys78 and Ser158 each act as charge relay system in the active site. Ser182 serves as the catalytic Acyl-ester intermediate.

It belongs to the amidase family. GatA subfamily. In terms of assembly, heterotrimer of A, B and C subunits.

The catalysed reaction is L-glutamyl-tRNA(Gln) + L-glutamine + ATP + H2O = L-glutaminyl-tRNA(Gln) + L-glutamate + ADP + phosphate + H(+). Its function is as follows. Allows the formation of correctly charged Gln-tRNA(Gln) through the transamidation of misacylated Glu-tRNA(Gln) in organisms which lack glutaminyl-tRNA synthetase. The reaction takes place in the presence of glutamine and ATP through an activated gamma-phospho-Glu-tRNA(Gln). This is Glutamyl-tRNA(Gln) amidotransferase subunit A from Rickettsia bellii (strain OSU 85-389).